Reading from the N-terminus, the 198-residue chain is NAD(P)H dehydrogenase (quinone) (198 aa).

A Flavodoxin-like domain is found at 4 to 189; the sequence is ILVLYYSMYG…SIARYQGEYV (186 aa). FMN contacts are provided by residues 10–15 and 78–80; these read SMYGHI and TRF. Residue Tyr12 participates in NAD(+) binding. Trp98 lines the substrate pocket. FMN-binding positions include 113–118 and His133; that span reads STGTGG.

This sequence belongs to the WrbA family. The cofactor is FMN.

The enzyme catalyses a quinone + NADH + H(+) = a quinol + NAD(+). It catalyses the reaction a quinone + NADPH + H(+) = a quinol + NADP(+). In Salmonella paratyphi A (strain ATCC 9150 / SARB42), this protein is NAD(P)H dehydrogenase (quinone).